The primary structure comprises 380 residues: MANLRKSHPLLKIANDALVDLPAPSNISVWWNFGSLLGLCLVTQIATGLFLAMHYTSDIATAFTSVAHICRDVNYGWLIRSIHANGASFFFICIYLHIGRGLYYGSYLYKETWTIGVVLLLLVMMTAFVGYVLPWGQMSFWGATVITNLLSAVPYVGGTLVQWIWGGFSVDNATLTRFFAFHFLFPFIIAAATVIHLLFLHETGSNNPTGLNSDSDKVPFHPYFTYKDLLGFAVLLTALASLALFSPNLLGDPDNFTPANPLVTPPHIKPEWYFLFAYAILRSIPNKLGGVLALLFSILVLMLVPFLHTSKQRSLMFRPVTQFLFWSLVADVMILTWIGGMPVEHPFVIIGQVASLIYFSLFLVLIPTAGLMENKILGWK.

The next 4 membrane-spanning stretches (helical) occupy residues 33 to 53, 77 to 98, 113 to 133, and 178 to 198; these read FGSLLGLCLVTQIATGLFLAM, WLIRSIHANGASFFFICIYLHI, WTIGVVLLLLVMMTAFVGYVL, and FFAFHFLFPFIIAAATVIHLL. Heme b is bound by residues histidine 83 and histidine 97. Heme b contacts are provided by histidine 182 and histidine 196. Histidine 201 is an a ubiquinone binding site. Transmembrane regions (helical) follow at residues 226-246, 288-308, 320-340, and 347-367; these read YKDLLGFAVLLTALASLALFS, LGGVLALLFSILVLMLVPFLH, VTQFLFWSLVADVMILTWIGG, and FVIIGQVASLIYFSLFLVLIP.

It belongs to the cytochrome b family. In terms of assembly, the cytochrome bc1 complex contains 3 respiratory subunits (MT-CYB, CYC1 and UQCRFS1), 2 core proteins (UQCRC1 and UQCRC2) and probably 6 low-molecular weight proteins. Requires heme b as cofactor.

Its subcellular location is the mitochondrion inner membrane. Functionally, component of the ubiquinol-cytochrome c reductase complex (complex III or cytochrome b-c1 complex) that is part of the mitochondrial respiratory chain. The b-c1 complex mediates electron transfer from ubiquinol to cytochrome c. Contributes to the generation of a proton gradient across the mitochondrial membrane that is then used for ATP synthesis. This Kareius bicoloratus (Stone flounder) protein is Cytochrome b (mt-cyb).